Consider the following 241-residue polypeptide: Chloride intracellular channel protein 1 (241 aa).

At Ala2 the chain carries N-acetylalanine. A required for insertion into the membrane region spans residues 2–90 (AEEQPQVELF…EEFLEAVLCP (89 aa)). Lys13 is modified (N6-acetyllysine). The G-site motif lies at 24 to 27 (CPFS). A disulfide bond links Cys24 and Cys59. Residues 26-46 (FSQRLFMVLWLKGVTFNVTTV) form a helical membrane-spanning segment. The GST C-terminal domain maps to 93–233 (YPKLAALNPE…PDDEEIELAY (141 aa)). Position 119 is an N6-acetyllysine (Lys119). At Ser121 the chain carries Phosphoserine. N6-acetyllysine is present on Lys131. Ser156 carries the phosphoserine modification. Phosphotyrosine is present on Tyr233.

The protein belongs to the chloride channel CLIC family. As to quaternary structure, monomer. Homodimer (in vitro). Interacts with TRAPPC2. Dimerization requires a conformation change that leads to the exposure of a large hydrophobic surface. In vivo, this may lead to membrane insertion.

It localises to the nucleus. It is found in the nucleus membrane. Its subcellular location is the cytoplasm. The protein localises to the cell membrane. The protein resides in the endoplasmic reticulum. The catalysed reaction is L-dehydroascorbate + 2 glutathione = glutathione disulfide + L-ascorbate. It catalyses the reaction chloride(in) = chloride(out). The enzyme catalyses iodide(out) = iodide(in). It carries out the reaction thiocyanate(in) = thiocyanate(out). The catalysed reaction is nitrate(in) = nitrate(out). It catalyses the reaction bromide(in) = bromide(out). The enzyme catalyses fluoride(in) = fluoride(out). In terms of biological role, in the soluble state, catalyzes glutaredoxin-like thiol disulfide exchange reactions with reduced glutathione as electron donor. Reduces selenite and dehydroascorbate and may act as an antioxidant during oxidative stress response. Can insert into membranes and form voltage-dependent multi-ion conductive channels. Membrane insertion seems to be redox-regulated and may occur only under oxidizing conditions. Involved in regulation of the cell cycle. The polypeptide is Chloride intracellular channel protein 1 (CLIC1) (Bos taurus (Bovine)).